We begin with the raw amino-acid sequence, 345 residues long: Protein RecA (345 aa).

ATP is bound at residue 65–72 (GPESSGKT).

The protein belongs to the RecA family.

It is found in the cytoplasm. Its function is as follows. Can catalyze the hydrolysis of ATP in the presence of single-stranded DNA, the ATP-dependent uptake of single-stranded DNA by duplex DNA, and the ATP-dependent hybridization of homologous single-stranded DNAs. It interacts with LexA causing its activation and leading to its autocatalytic cleavage. The chain is Protein RecA from Campylobacter fetus subsp. fetus (strain 82-40).